We begin with the raw amino-acid sequence, 318 residues long: Deoxyribose-phosphate aldolase (318 aa).

Asp-155 acts as the Proton donor/acceptor in catalysis. Lys-218 acts as the Schiff-base intermediate with acetaldehyde in catalysis. Residue Lys-254 is the Proton donor/acceptor of the active site.

It belongs to the DeoC/FbaB aldolase family. DeoC type 2 subfamily. In terms of assembly, interacts with YBX1.

Its subcellular location is the cytoplasm. It is found in the cytoplasmic granule. It localises to the nucleus. It catalyses the reaction 2-deoxy-D-ribose 5-phosphate = D-glyceraldehyde 3-phosphate + acetaldehyde. Its pathway is carbohydrate degradation; 2-deoxy-D-ribose 1-phosphate degradation; D-glyceraldehyde 3-phosphate and acetaldehyde from 2-deoxy-alpha-D-ribose 1-phosphate: step 2/2. In terms of biological role, catalyzes a reversible aldol reaction between acetaldehyde and D-glyceraldehyde 3-phosphate to generate 2-deoxy-D-ribose 5-phosphate. Participates in stress granule (SG) assembly. May allow ATP production from extracellular deoxyinosine in conditions of energy deprivation. The chain is Deoxyribose-phosphate aldolase (DERA) from Bos taurus (Bovine).